Reading from the N-terminus, the 258-residue chain is uncharacterized protein (258 aa).

Ile-17, Asp-53, Asn-80, Arg-113, Tyr-145, Lys-149, Ile-178, and Ser-180 together coordinate NADP(+). The active-site Proton donor is Tyr-145. Lys-149 functions as the Lowers pKa of active site Tyr in the catalytic mechanism.

Belongs to the short-chain dehydrogenases/reductases (SDR) family.

It localises to the cytoplasm. The protein localises to the nucleus. This is an uncharacterized protein from Schizosaccharomyces pombe (strain 972 / ATCC 24843) (Fission yeast).